We begin with the raw amino-acid sequence, 514 residues long: MPPLRRQALTLAEKKAIRKHYFESATKPSQQELISWFEEHFHKKLAQSTVSSILSSKNEFLDNLDAENSQIRRNRQGKYPILENALIDWQTRLQKQDGAITGNAIKKSAAELWRRIPEYSELPIPEFSNGWLEKFKKRCLKHGLKLQGESTSVNQGTYEENMVQIQELISLFDPKDIFNMDETGLCWKLIPNQSPASERVKGITRDKARVTVTICCNATGSEKAPLWVIGYAKSPRAFRQANAHPDSMDFHWRYNGTARMTTSIMEEWLRWFDDLMKGRKVLLILDKFVAHECALENIRNSERKLVNTTVVFLPVNSTEIYHPCGQEIVYAFKSYYRKYWLNYMLEEIRLGKNPSKTMNVLKAVRWMIRSWNVDFEPSIIYNCFLRSGLFQNQQPLTGPSPETIRIAVNLQELIGKYLGDKDIFQIENFINPIEENSADTNDDIVNQVAAQFLDEREFETDEEEEESQYLLSTKDAINAINTLLNFQEQSEDGNVLFTRTLLQFQKVLESRSIV.

The 76-residue stretch at 70 to 145 (QIRRNRQGKY…KKRCLKHGLK (76 aa)) folds into the HTH CENPB-type domain. The DDE-1 domain maps to 172–384 (FDPKDIFNMD…FEPSIIYNCF (213 aa)).

The protein resides in the nucleus. Its subcellular location is the chromosome. It localises to the centromere. In terms of biological role, binds to the central core and core-associated repeat regions of centromeric heterochromatin. The protein is CENP-B homolog protein 2 (cbh2) of Schizosaccharomyces pombe (strain 972 / ATCC 24843) (Fission yeast).